We begin with the raw amino-acid sequence, 217 residues long: MKLILLGAPGAGKGTQATFICQKFGIPQISTGDMLRAAVKAGTPLGLEAKKVMDSGGLVSDDIIIGLVKERITQPDCANGFLFDGFPRTIPQADAMKAAGVKLDLVLEIDVPDEAIIERMSGRRVHVASGRTYHVKFNPPKVAGVDDVTGEPLIQRDDDKEATVLKRLQVYQSQTRPLVDYYAAWAATGDAAAPKYRKIAGTGSVDEITTRALAALA.

10–15 (GAGKGT) provides a ligand contact to ATP. Residues 30–59 (STGDMLRAAVKAGTPLGLEAKKVMDSGGLV) form an NMP region. Residues Thr31, Arg36, 57–59 (GLV), 85–88 (GFPR), and Gln92 contribute to the AMP site. The tract at residues 122 to 159 (GRRVHVASGRTYHVKFNPPKVAGVDDVTGEPLIQRDDD) is LID. Residues Arg123 and 132 to 133 (TY) contribute to the ATP site. Residues Arg156 and Arg167 each contribute to the AMP site. Gly203 contacts ATP.

Belongs to the adenylate kinase family. Monomer.

The protein resides in the cytoplasm. It catalyses the reaction AMP + ATP = 2 ADP. It participates in purine metabolism; AMP biosynthesis via salvage pathway; AMP from ADP: step 1/1. Catalyzes the reversible transfer of the terminal phosphate group between ATP and AMP. Plays an important role in cellular energy homeostasis and in adenine nucleotide metabolism. The protein is Adenylate kinase of Methylibium petroleiphilum (strain ATCC BAA-1232 / LMG 22953 / PM1).